A 406-amino-acid polypeptide reads, in one-letter code: NIPA-like protein 3 (406 aa).

The next 4 membrane-spanning stretches (helical) occupy residues 33-53 (NLIG…ALNL), 76-96 (WWLG…SYAF), 101-121 (LIVP…IIFI), and 135-155 (ILSF…VTFA). N166 carries N-linked (GlcNAc...) asparagine glycosylation. Transmembrane regions (helical) follow at residues 171 to 191 (LVSW…CLLL), 202 to 222 (IVVI…TVKA), 240 to 260 (PIFY…AAFL), 271 to 291 (LIAS…GAIF), and 300 to 320 (VLHI…VFLI). At S372 the chain carries Phosphoserine.

Belongs to the NIPA family.

The protein resides in the membrane. The protein is NIPA-like protein 3 (NIPAL3) of Pongo abelii (Sumatran orangutan).